The chain runs to 472 residues: PEP-dependent dihydroxyacetone kinase, phosphoryl donor subunit DhaM (472 aa).

The PTS EIIA type-4 domain occupies 1 to 135; the sequence is MVNLVIVSHS…HALEAKREQL (135 aa). His9 acts as the Tele-phosphohistidine intermediate in catalysis. One can recognise an HPr domain in the interval 155–242; sequence ARSLAVVIKN…QLAEDNFGET (88 aa). The active-site Pros-phosphohistidine intermediate is His169. Residues 264–472 are PTS EI-like, N-terminal part; sequence QPVLCTVQAK…VKTQRFNRQG (209 aa). His430 serves as the catalytic Tele-phosphohistidine intermediate.

Belongs to the PEP-utilizing enzyme family. Homodimer. The dihydroxyacetone kinase complex is composed of a homodimer of DhaM, a homodimer of DhaK and the subunit DhaL.

It carries out the reaction dihydroxyacetone + phosphoenolpyruvate = dihydroxyacetone phosphate + pyruvate. It participates in polyol metabolism; glycerol degradation. Functionally, component of the dihydroxyacetone kinase complex, which is responsible for the phosphoenolpyruvate (PEP)-dependent phosphorylation of dihydroxyacetone. DhaM serves as the phosphoryl donor. Is phosphorylated by phosphoenolpyruvate in an EI- and HPr-dependent reaction, and a phosphorelay system on histidine residues finally leads to phosphoryl transfer to DhaL and dihydroxyacetone. This chain is PEP-dependent dihydroxyacetone kinase, phosphoryl donor subunit DhaM, found in Escherichia coli (strain K12).